Consider the following 83-residue polypeptide: Small ribosomal subunit protein uS17 (83 aa).

The protein belongs to the universal ribosomal protein uS17 family. As to quaternary structure, part of the 30S ribosomal subunit.

In terms of biological role, one of the primary rRNA binding proteins, it binds specifically to the 5'-end of 16S ribosomal RNA. The chain is Small ribosomal subunit protein uS17 from Gloeobacter violaceus (strain ATCC 29082 / PCC 7421).